Consider the following 181-residue polypeptide: Large ribosomal subunit protein uL5 (181 aa).

Belongs to the universal ribosomal protein uL5 family. As to quaternary structure, part of the 50S ribosomal subunit; part of the 5S rRNA/L5/L18/L25 subcomplex. Contacts the 5S rRNA and the P site tRNA. Forms a bridge to the 30S subunit in the 70S ribosome.

This is one of the proteins that bind and probably mediate the attachment of the 5S RNA into the large ribosomal subunit, where it forms part of the central protuberance. In the 70S ribosome it contacts protein S13 of the 30S subunit (bridge B1b), connecting the 2 subunits; this bridge is implicated in subunit movement. Contacts the P site tRNA; the 5S rRNA and some of its associated proteins might help stabilize positioning of ribosome-bound tRNAs. The protein is Large ribosomal subunit protein uL5 of Desulforamulus reducens (strain ATCC BAA-1160 / DSM 100696 / MI-1) (Desulfotomaculum reducens).